The sequence spans 193 residues: Pre-histone-like nucleoprotein (193 aa).

The residue at position 2 (Ser2) is an N-acetylserine; by host. A propeptide spanning residues 2 to 24 (SIFISPSNNTGWGLRAPSKMYGG) is cleaved from the precursor. The residue at position 48 (Lys48) is an N6-acetyllysine; by host. Phosphothreonine; by host is present on Thr55. A Nuclear localization signal motif is present at residues 183–193 (RVPVRTRPPRT).

The protein belongs to the adenoviridae histone-like nucleoprotein family. Interacts with the core-capsid bridging protein; this interaction bridges the virus core to the capsid. Interacts with host NPM1; this interaction might play a role in placing the pre-histone-like nucleoprotein on the viral DNA or regulating viral gene expression. Interacts with host HMGB1; this interaction inhibits host immune response. Cleaved near the N-terminus by the viral protease during virion maturation to form the mature protein.

The protein localises to the virion. Its subcellular location is the host nucleus. It is found in the host nucleolus. In terms of biological role, plays a role in the inhibition of host immune response within the nucleus. Interacts with cellular nucleosomes and immobilizes the host immune danger signal HMGB1 on chromatin. In turn, prevents HMGB1 release out of the cell and thus decreases inflammation. Also plays a role in the wrapping and condensation of the viral DNA. May also promote viral genome import into the nucleus. The protein is Pre-histone-like nucleoprotein of Homo sapiens (Human).